A 436-amino-acid chain; its full sequence is MKGFMIAAPASGSGKTTVTLGLLRALKRRGEVLAPVKAGPDYIDPAYHRAASGVDCFNLDPWAMRPGLISALSSRMTESGARVLVAEGMMGLFDGAIDGKGSSADLARLLDLPVVLVVDCARQSHSIAALVWGFSQFRKDVLIEGVILNRVGSPRHEAMLRGALAPLGVPVLGALPRDPALSLPERHLGLVQADEHAGLESFLEQAADVMEAHIDMDALQTIWLRPKRYDAMANVARLKPLGNRIAVARDDAFAFAYMHLFEGWRRRGAEISFFSPLADEAPKADADAIYLPGGYPELHAQRLAGASRFRTAIGDAAARGVTVYGECGGYMVLGKTLEDAAGVHHPMLGLLPLETSFARRKLHLGYRLLEPLGGLPWDMPLKAHEFHYASIVREEKADRLFRVRDASGENLGEAGLRVGSVSGSFMHVIDFSGEAA.

The GATase cobBQ-type domain maps to 244–435 (RIAVARDDAF…MHVIDFSGEA (192 aa)). The Nucleophile role is filled by Cys327.

The protein belongs to the CobB/CbiA family. The cofactor is Mg(2+).

It catalyses the reaction hydrogenobyrinate + 2 L-glutamine + 2 ATP + 2 H2O = hydrogenobyrinate a,c-diamide + 2 L-glutamate + 2 ADP + 2 phosphate + 2 H(+). It functions in the pathway cofactor biosynthesis; adenosylcobalamin biosynthesis; cob(II)yrinate a,c-diamide from precorrin-2 (aerobic route): step 9/10. In terms of biological role, catalyzes the ATP-dependent amidation of the two carboxylate groups at positions a and c of hydrogenobyrinate, using either L-glutamine or ammonia as the nitrogen source. This Brucella suis biovar 1 (strain 1330) protein is Hydrogenobyrinate a,c-diamide synthase.